Here is a 203-residue protein sequence, read N- to C-terminus: Orotate phosphoribosyltransferase (203 aa).

5-phospho-alpha-D-ribose 1-diphosphate is bound by residues R94, K98, H100, and E120–S128. S124 contacts orotate.

Belongs to the purine/pyrimidine phosphoribosyltransferase family. PyrE subfamily. Homodimer. Mg(2+) is required as a cofactor.

It carries out the reaction orotidine 5'-phosphate + diphosphate = orotate + 5-phospho-alpha-D-ribose 1-diphosphate. It functions in the pathway pyrimidine metabolism; UMP biosynthesis via de novo pathway; UMP from orotate: step 1/2. Functionally, catalyzes the transfer of a ribosyl phosphate group from 5-phosphoribose 1-diphosphate to orotate, leading to the formation of orotidine monophosphate (OMP). The sequence is that of Orotate phosphoribosyltransferase from Staphylococcus aureus (strain MSSA476).